The primary structure comprises 518 residues: 3-octaprenyl-4-hydroxybenzoate carboxy-lyase (518 aa).

Mn(2+) is bound at residue asparagine 177. Residues isoleucine 180 to arginine 182, arginine 194 to leucine 196, and arginine 199 to glycine 200 contribute to the prenylated FMN site. Mn(2+) is bound at residue glutamate 243. The active-site Proton donor is the aspartate 318.

This sequence belongs to the UbiD family. As to quaternary structure, homohexamer. Requires prenylated FMN as cofactor. Mn(2+) serves as cofactor.

The protein resides in the cell membrane. The catalysed reaction is a 4-hydroxy-3-(all-trans-polyprenyl)benzoate + H(+) = a 2-(all-trans-polyprenyl)phenol + CO2. It functions in the pathway cofactor biosynthesis; ubiquinone biosynthesis. Its function is as follows. Catalyzes the decarboxylation of 3-octaprenyl-4-hydroxy benzoate to 2-octaprenylphenol, an intermediate step in ubiquinone biosynthesis. In Burkholderia multivorans (strain ATCC 17616 / 249), this protein is 3-octaprenyl-4-hydroxybenzoate carboxy-lyase.